Consider the following 402-residue polypeptide: Ferrochelatase, mitochondrial (402 aa).

The transit peptide at 1–33 (MAAAGRAARPLVAGGRQLRVPLRWRGQVAAAAP) directs the protein to the mitochondrion. Residues Arg94, Tyr102, and Ser109 each contribute to the protoporphyrin IX site. A [2Fe-2S] cluster-binding site is contributed by Cys175. Residues His209 and Asp362 contribute to the active site. Cys382, Cys385, and Cys390 together coordinate [2Fe-2S] cluster.

The protein belongs to the ferrochelatase family. Homodimer. Homotetramer. [2Fe-2S] cluster is required as a cofactor.

Its subcellular location is the mitochondrion inner membrane. It carries out the reaction heme b + 2 H(+) = protoporphyrin IX + Fe(2+). The protein operates within porphyrin-containing compound metabolism; protoheme biosynthesis; protoheme from protoporphyrin-IX: step 1/1. Functionally, catalyzes the ferrous insertion into protoporphyrin IX. The protein is Ferrochelatase, mitochondrial of Gallus gallus (Chicken).